A 156-amino-acid chain; its full sequence is ATP synthase subunit b (156 aa).

Residues 7 to 27 (LFVQAIVFLILVWFTMQFVWP) form a helical membrane-spanning segment.

Belongs to the ATPase B chain family. In terms of assembly, F-type ATPases have 2 components, F(1) - the catalytic core - and F(0) - the membrane proton channel. F(1) has five subunits: alpha(3), beta(3), gamma(1), delta(1), epsilon(1). F(0) has three main subunits: a(1), b(2) and c(10-14). The alpha and beta chains form an alternating ring which encloses part of the gamma chain. F(1) is attached to F(0) by a central stalk formed by the gamma and epsilon chains, while a peripheral stalk is formed by the delta and b chains.

It localises to the cell inner membrane. F(1)F(0) ATP synthase produces ATP from ADP in the presence of a proton or sodium gradient. F-type ATPases consist of two structural domains, F(1) containing the extramembraneous catalytic core and F(0) containing the membrane proton channel, linked together by a central stalk and a peripheral stalk. During catalysis, ATP synthesis in the catalytic domain of F(1) is coupled via a rotary mechanism of the central stalk subunits to proton translocation. Functionally, component of the F(0) channel, it forms part of the peripheral stalk, linking F(1) to F(0). This Verminephrobacter eiseniae (strain EF01-2) protein is ATP synthase subunit b.